We begin with the raw amino-acid sequence, 456 residues long: Adenylyltransferase and sulfurtransferase uba4 (456 aa).

ATP is bound by residues Gly101, Asp122, 129 to 133 (SNLHR), Lys146, and 161 to 162 (DH). Zn(2+)-binding residues include Cys210 and Cys213. Cys227 functions as the Glycyl thioester intermediate; for adenylyltransferase activity in the catalytic mechanism. Residues Cys300 and Cys303 each contribute to the Zn(2+) site. Residues 350 to 454 (KEKEHLLIDV…WKEQVDGSWP (105 aa)) enclose the Rhodanese domain. Catalysis depends on Cys409, which acts as the Cysteine persulfide intermediate; for sulfurtransferase activity.

In the N-terminal section; belongs to the HesA/MoeB/ThiF family. UBA4 subfamily. Zn(2+) serves as cofactor.

Its subcellular location is the cytoplasm. It localises to the cytosol. The enzyme catalyses [molybdopterin-synthase sulfur-carrier protein]-C-terminal Gly-Gly + ATP + H(+) = [molybdopterin-synthase sulfur-carrier protein]-C-terminal Gly-Gly-AMP + diphosphate. The catalysed reaction is [molybdopterin-synthase sulfur-carrier protein]-C-terminal Gly-Gly-AMP + S-sulfanyl-L-cysteinyl-[cysteine desulfurase] + AH2 = [molybdopterin-synthase sulfur-carrier protein]-C-terminal-Gly-aminoethanethioate + L-cysteinyl-[cysteine desulfurase] + A + AMP + 2 H(+). The protein operates within tRNA modification; 5-methoxycarbonylmethyl-2-thiouridine-tRNA biosynthesis. In terms of biological role, plays a central role in 2-thiolation of mcm(5)S(2)U at tRNA wobble positions of cytosolic tRNA(Lys), tRNA(Glu) and tRNA(Gln). Also essential during biosynthesis of the molybdenum cofactor. Acts by mediating the C-terminal thiocarboxylation of sulfur carriers urm1 and mocs2a. Its N-terminus first activates urm1 and mocs2a as acyl-adenylates (-COAMP), then the persulfide sulfur on the catalytic cysteine is transferred to urm1 and mocs2a to form thiocarboxylation (-COSH) of their C-terminus. The reaction probably involves hydrogen sulfide that is generated from the persulfide intermediate and that acts as a nucleophile towards urm1 and mocs2a. Subsequently, a transient disulfide bond is formed. Does not use thiosulfate as sulfur donor; nfs1 probably acting as a sulfur donor for thiocarboxylation reactions. The sequence is that of Adenylyltransferase and sulfurtransferase uba4 from Sclerotinia sclerotiorum (strain ATCC 18683 / 1980 / Ss-1) (White mold).